Here is a 445-residue protein sequence, read N- to C-terminus: Phosphoglucosamine mutase (445 aa).

Serine 102 (phosphoserine intermediate) is an active-site residue. Positions 102, 241, 243, and 245 each coordinate Mg(2+). Phosphoserine is present on serine 102.

It belongs to the phosphohexose mutase family. Mg(2+) serves as cofactor. Post-translationally, activated by phosphorylation.

It carries out the reaction alpha-D-glucosamine 1-phosphate = D-glucosamine 6-phosphate. Its function is as follows. Catalyzes the conversion of glucosamine-6-phosphate to glucosamine-1-phosphate. The protein is Phosphoglucosamine mutase of Escherichia coli O7:K1 (strain IAI39 / ExPEC).